A 329-amino-acid polypeptide reads, in one-letter code: MTHFNKGPSYGLSAEVKNKIASKYDHQAEEDLRNWIEEVTGMSIGPNFQLGLKDGIILCELINKLQPGSVKKVNESSLNWPQLENIGNFIKAIQAYGMKPHDIFEANDLFENGNMTQVQTTLVALAGLAKTKGFHTTIDIGVKYAEKQTRRFDEGKLKAGQSVIGLQMGTNKCASQAGMTAYGTRRHLYDPKMQTDKPFDQTTISLQMGTNKGASQAGMLAPGTRRDIYDQKLTLQPVDNSTISLQMGTNKVASQKGMSVYGLGRQVYDPKYCAAPTEPVIHNGSQGTGTNGSEISDSDYQAEYPDEYHGEYQDDYPRDYQYSDQGIDY.

N6-acetyllysine is present on K23. In terms of domain architecture, Calponin-homology (CH) spans 26–130 (HQAEEDLRNW…TLVALAGLAK (105 aa)). At K158 the chain carries N6-methyllysine. 3 Calponin-like repeats span residues 164–189 (IGLQ…RHLY), 204–229 (ISLQ…RDIY), and 243–268 (ISLQ…RQVY). Residues 279-329 (PVIHNGSQGTGTNGSEISDSDYQAEYPDEYHGEYQDDYPRDYQYSDQGIDY) are disordered. Residues 306 to 318 (DEYHGEYQDDYPR) are compositionally biased toward basic and acidic residues. S323 carries the post-translational modification Phosphoserine.

Belongs to the calponin family. As to expression, expressed in both non-smooth muscle tissues as well as smooth muscle tissues.

In terms of biological role, thin filament-associated protein that is implicated in the regulation and modulation of smooth muscle contraction. It is capable of binding to actin, calmodulin and tropomyosin. The interaction of calponin with actin inhibits the actomyosin Mg-ATPase activity. This Homo sapiens (Human) protein is Calponin-3 (CNN3).